We begin with the raw amino-acid sequence, 449 residues long: Deoxyguanosinetriphosphate triphosphohydrolase-like protein (449 aa).

Positions 1 to 27 are disordered; sequence MTSSVWQERRHGEDKQRRNDHRSPYQR. A compositionally biased stretch (basic and acidic residues) spans 7–27; that stretch reads QERRHGEDKQRRNDHRSPYQR. The HD domain occupies 59-255; the sequence is RLTHSLEVSQ…MELADDIAYA (197 aa).

The protein belongs to the dGTPase family. Type 2 subfamily.

The sequence is that of Deoxyguanosinetriphosphate triphosphohydrolase-like protein from Shewanella baltica (strain OS195).